The primary structure comprises 103 residues: Small ribosomal subunit protein uS10 (103 aa).

This sequence belongs to the universal ribosomal protein uS10 family. As to quaternary structure, part of the 30S ribosomal subunit.

Its function is as follows. Involved in the binding of tRNA to the ribosomes. The chain is Small ribosomal subunit protein uS10 from Alteromonas mediterranea (strain DSM 17117 / CIP 110805 / LMG 28347 / Deep ecotype).